A 515-amino-acid chain; its full sequence is Forkhead box protein H1 (515 aa).

Positions 55–103 are disordered; that stretch reads YREGGTWSPDRGSMHGLSPGTQEGSCTQAEGTKDSLGGDETLSRKSKKK. Residues 73–84 are compositionally biased toward polar residues; that stretch reads PGTQEGSCTQAE. Residues 110–206 constitute a DNA-binding region (fork-head); sequence KPPYSYLAMI…MKLQNTALTR (97 aa). The disordered stretch occupies residues 307–399; sequence YPQSKPTRNG…EPPKKMPLLS (93 aa). The segment covering 322–339 has biased composition (low complexity); sequence SASHSTYSSSSSSISTIS. Polar residues predominate over residues 375–388; it reads STPSSDTDAGNYSP. The SMAD-interaction domain (SID) stretch occupies residues 377 to 503; that stretch reads PSSDTDAGNY…PSFLGQCLGS (127 aa). The Fast/FoxH1 motif 1 (FM1) motif lies at 402-406; that stretch reads LPTSY. Residues 412-418 carry the Fast/FoxH1 motif 2 (FM2) motif; that stretch reads PNVVAPP. Positions 467-488 match the SMAD-interaction motif (SIM) motif; the sequence is LDNMLKTVPPNKSVFDVLTSHP.

ARF1 contains 2 smad2s, 1 smad4 and 1 foxh1/fast-1 protein. Interaction with smad4 is most likely indirect through interaction with the MH2 domain of smad2. Binds to the MH2 domain of smad3, which can incorporate into the ARF1 complex. The ARF1 and ARF2 complexes are activated by distinct TGF-beta family members; formation of ARF1 is promoted by activin. Interacts (via Fork-head domain) with gtf2ird1/wbscr11 (via repeats 4-5).

The protein localises to the nucleus. Its function is as follows. Transcriptional activator. Recognizes and binds to the DNA sequence 5'-TGT[GT][GT]ATT-3'. Upon TGF-beta induction, forms a transcriptionally active complex with smad2 and smad4 called activin-responsive factor 1 (ARF1), which binds a site on the mix-B/mix.2 promoter called the activin response element (ARE). Binds to activated smads and the ARE with much lower affinity than fast3. Necessary for the first steps in mesoderm specification, directly inducing mesodermal genes. Acts with fast3 to control the convergent extension movements of gastrulation. Binds to the proximal element (PE) of the gsc gene and cooperates with gtf2ird1/wbscr11 and SMAD proteins to regulate gsc transcription. The protein is Forkhead box protein H1 of Xenopus tropicalis (Western clawed frog).